A 340-amino-acid polypeptide reads, in one-letter code: Zinc finger protein 367 (340 aa).

Residues 101 to 140 (GAPQSSASVAAVSGGEDEEEASSPDSGHLKDGIRRGRPRA) are disordered. Positions 127–140 (GHLKDGIRRGRPRA) are enriched in basic and acidic residues. 2 C2H2-type zinc fingers span residues 157–179 (IRCN…KRTH) and 185–209 (YLCD…QRLH). The segment at 280–317 (KGKLVQKADQEQQDPLEYLQSDEEDDEKSGAQRRLQEQ) is disordered. The stretch at 299–332 (QSDEEDDEKSGAQRRLQEQRERLHGALALIELAN) forms a coiled coil. Phosphoserine is present on Ser-300. Positions 307–317 (KSGAQRRLQEQ) are enriched in basic and acidic residues.

Belongs to the krueppel C2H2-type zinc-finger protein family. In terms of tissue distribution, expressed in bone marrow and ovary.

The protein resides in the nucleus. Functionally, transcriptional activator. Isoform 1 may be involved in transcriptional activation of erythroid genes. The protein is Zinc finger protein 367 (Znf367) of Mus musculus (Mouse).